Reading from the N-terminus, the 87-residue chain is Large ribosomal subunit protein eL33 (87 aa).

The protein belongs to the eukaryotic ribosomal protein eL33 family.

The polypeptide is Large ribosomal subunit protein eL33 (Pyrococcus abyssi (strain GE5 / Orsay)).